We begin with the raw amino-acid sequence, 378 residues long: UPF0754 membrane protein BCAH187_A1042 (378 aa).

A run of 2 helical transmembrane segments spans residues 1–21 and 357–377; these read MNIWLSMLTTTGLGAIIGGFT and YLGALLGGMIGIVQGLLLLFL.

This sequence belongs to the UPF0754 family.

The protein localises to the cell membrane. This chain is UPF0754 membrane protein BCAH187_A1042, found in Bacillus cereus (strain AH187).